The following is a 968-amino-acid chain: Glycine dehydrogenase (decarboxylating) (968 aa).

The residue at position 712 (Lys-712) is an N6-(pyridoxal phosphate)lysine.

The protein belongs to the GcvP family. In terms of assembly, the glycine cleavage system is composed of four proteins: P, T, L and H. Pyridoxal 5'-phosphate serves as cofactor.

It catalyses the reaction N(6)-[(R)-lipoyl]-L-lysyl-[glycine-cleavage complex H protein] + glycine + H(+) = N(6)-[(R)-S(8)-aminomethyldihydrolipoyl]-L-lysyl-[glycine-cleavage complex H protein] + CO2. Functionally, the glycine cleavage system catalyzes the degradation of glycine. The P protein binds the alpha-amino group of glycine through its pyridoxal phosphate cofactor; CO(2) is released and the remaining methylamine moiety is then transferred to the lipoamide cofactor of the H protein. This is Glycine dehydrogenase (decarboxylating) from Prochlorococcus marinus (strain NATL1A).